Reading from the N-terminus, the 441-residue chain is Glutamyl-tRNA reductase (441 aa).

Substrate contacts are provided by residues 47–50, Ser110, 115–117, and Gln121; these read TCNR and ERE. Cys48 acts as the Nucleophile in catalysis. 192-197 is a binding site for NADP(+); sequence GTGAYA.

The protein belongs to the glutamyl-tRNA reductase family. As to quaternary structure, homodimer.

It catalyses the reaction (S)-4-amino-5-oxopentanoate + tRNA(Glu) + NADP(+) = L-glutamyl-tRNA(Glu) + NADPH + H(+). It participates in porphyrin-containing compound metabolism; protoporphyrin-IX biosynthesis; 5-aminolevulinate from L-glutamyl-tRNA(Glu): step 1/2. Its function is as follows. Catalyzes the NADPH-dependent reduction of glutamyl-tRNA(Glu) to glutamate 1-semialdehyde (GSA). The chain is Glutamyl-tRNA reductase from Pseudarthrobacter chlorophenolicus (strain ATCC 700700 / DSM 12829 / CIP 107037 / JCM 12360 / KCTC 9906 / NCIMB 13794 / A6) (Arthrobacter chlorophenolicus).